Reading from the N-terminus, the 395-residue chain is uncharacterized protein (395 aa).

This is an uncharacterized protein from Methanocaldococcus jannaschii (strain ATCC 43067 / DSM 2661 / JAL-1 / JCM 10045 / NBRC 100440) (Methanococcus jannaschii).